The following is a 396-amino-acid chain: Inositol polyphosphate multikinase (396 aa).

Residues 1–13 show a composition bias toward low complexity; that stretch reads MAAEPPALRLRPP. Residues 1-22 form a disordered region; the sequence is MAAEPPALRLRPPGSTGDSPPV. An N-acetylalanine modification is found at alanine 2. A Phosphoserine modification is found at serine 19. An ATP-binding site is contributed by lysine 58. Arginine 65 contributes to the substrate binding site. Residues 114 to 116 and aspartate 127 contribute to the ATP site; that span reads EDV. Substrate-binding positions include lysine 129, 143 to 150, and glutamine 179; that span reads KIQQQVSK. Residues 300 to 310 carry the Nuclear localization signal motif; it reads RHRKLYAKKHQ. Residue aspartate 365 participates in ATP binding.

Belongs to the inositol phosphokinase (IPK) family. Mg(2+) serves as cofactor. Highly expressed in kidney, and at lower levels in hippocampus, brain cortex, cerebellum, heart and lung.

The protein resides in the nucleus. The enzyme catalyses 1D-myo-inositol 1,4,5-trisphosphate + 2 ATP = 1D-myo-inositol 1,3,4,5,6-pentakisphosphate + 2 ADP + 2 H(+). It catalyses the reaction 1D-myo-inositol 1,3,4,6-tetrakisphosphate + ATP = 1D-myo-inositol 1,3,4,5,6-pentakisphosphate + ADP + H(+). It carries out the reaction 1-octadecanoyl-2-(5Z,8Z,11Z,14Z)-eicosatetraenoyl-sn-glycero-3-phospho-1D-myo-inositol 4,5-bisphosphate + ATP = 1-octadecanoyl-2-(5Z,8Z,11Z,14Z-eicosatetraenoyl)-sn-glycero-3-phospho-(1D-myo-inositol 3,4,5-triphosphate) + ADP + H(+). The catalysed reaction is a 1,2-diacyl-sn-glycero-3-phospho-(1D-myo-inositol-4,5-bisphosphate) + ATP = a 1,2-diacyl-sn-glycero-3-phospho-(1D-myo-inositol-3,4,5-trisphosphate) + ADP + H(+). The enzyme catalyses 1D-myo-inositol 1,4,5,6-tetrakisphosphate + ATP = 1D-myo-inositol 1,3,4,5,6-pentakisphosphate + ADP + H(+). It participates in phospholipid metabolism; phosphatidylinositol metabolism. Its function is as follows. Inositol phosphate kinase with a broad substrate specificity. Phosphorylates inositol 1,4,5-trisphosphate (Ins(1,4,5)P3) first to inositol 1,3,4,5-tetrakisphosphate and then to inositol 1,3,4,5,6-pentakisphosphate (Ins(1,3,4,5,6)P5). Phosphorylates inositol 1,3,4,6-tetrakisphosphate (Ins(1,3,4,6)P4). Phosphorylates inositol 1,4,5,6-tetrakisphosphate (Ins(1,4,5,6)P4). Phosphorylates glycero-3-phospho-1D-myo-inositol 4,5-bisphosphate to glycero-3-phospho-1D-myo-inositol 3,4,5-trisphosphate. Plays an important role in MLKL-mediated necroptosis via its role in the biosynthesis of inositol pentakisphosphate (InsP5) and inositol hexakisphosphate (InsP6). Binding of these highly phosphorylated inositol phosphates to MLKL mediates the release of an N-terminal auto-inhibitory region, leading to activation of the kinase. Essential for activated phospho-MLKL to oligomerize and localize to the cell membrane during necroptosis. Required for normal embryonic development, probably via its role in the biosynthesis of inositol 1,3,4,5,6-pentakisphosphate (Ins(1,3,4,5,6)P5) and inositol hexakisphosphate (InsP6). The chain is Inositol polyphosphate multikinase (Ipmk) from Rattus norvegicus (Rat).